Here is a 517-residue protein sequence, read N- to C-terminus: GMP synthase [glutamine-hydrolyzing] (517 aa).

The region spanning 11 to 202 (KIIALDFGSQ…AFDVCGAKAN (192 aa)) is the Glutamine amidotransferase type-1 domain. The active-site Nucleophile is the Cys88. Catalysis depends on residues His176 and Glu178. A GMPS ATP-PPase domain is found at 203-392 (WTMDDFIDMQ…LGIPHELVWR (190 aa)). 230–236 (SGGVDSS) contacts ATP.

As to quaternary structure, homodimer.

It carries out the reaction XMP + L-glutamine + ATP + H2O = GMP + L-glutamate + AMP + diphosphate + 2 H(+). It functions in the pathway purine metabolism; GMP biosynthesis; GMP from XMP (L-Gln route): step 1/1. Its function is as follows. Catalyzes the synthesis of GMP from XMP. This chain is GMP synthase [glutamine-hydrolyzing], found in Limosilactobacillus reuteri (strain DSM 20016) (Lactobacillus reuteri).